A 250-amino-acid polypeptide reads, in one-letter code: DNA polymerase sliding clamp (250 aa).

This sequence belongs to the PCNA family. Homotrimer. The subunits circularize to form a toroid; DNA passes through its center. Replication factor C (RFC) is required to load the toroid on the DNA.

Functionally, sliding clamp subunit that acts as a moving platform for DNA processing. Responsible for tethering the catalytic subunit of DNA polymerase and other proteins to DNA during high-speed replication. The sequence is that of DNA polymerase sliding clamp from Methanococcus maripaludis (strain DSM 14266 / JCM 13030 / NBRC 101832 / S2 / LL).